A 502-amino-acid polypeptide reads, in one-letter code: Glutamate--tRNA ligase (502 aa).

The 'HIGH' region motif lies at 12–22; it reads PSPTGYLHVGG. The short motif at 259 to 263 is the 'KMSKS' region element; that stretch reads KLSKR. Lys-262 provides a ligand contact to ATP.

This sequence belongs to the class-I aminoacyl-tRNA synthetase family. Glutamate--tRNA ligase type 1 subfamily. Monomer.

Its subcellular location is the cytoplasm. The enzyme catalyses tRNA(Glu) + L-glutamate + ATP = L-glutamyl-tRNA(Glu) + AMP + diphosphate. Its function is as follows. Catalyzes the attachment of glutamate to tRNA(Glu) in a two-step reaction: glutamate is first activated by ATP to form Glu-AMP and then transferred to the acceptor end of tRNA(Glu). In Pelodictyon phaeoclathratiforme (strain DSM 5477 / BU-1), this protein is Glutamate--tRNA ligase.